Consider the following 601-residue polypeptide: Glutamine--tRNA ligase (601 aa).

The 'HIGH' region signature appears at 76-86 (PEPNGYLHIGH). ATP contacts are provided by residues 77–79 (EPN) and 83–89 (HIGHAKS). The L-glutamine site is built by Asp-109 and Tyr-253. Residues Thr-272, 301 to 302 (RL), and 309 to 311 (MSK) contribute to the ATP site. Positions 308 to 312 (VMSKR) match the 'KMSKS' region motif.

This sequence belongs to the class-I aminoacyl-tRNA synthetase family. Monomer.

It localises to the cytoplasm. The enzyme catalyses tRNA(Gln) + L-glutamine + ATP = L-glutaminyl-tRNA(Gln) + AMP + diphosphate. This Rhodopirellula baltica (strain DSM 10527 / NCIMB 13988 / SH1) protein is Glutamine--tRNA ligase.